Consider the following 317-residue polypeptide: uncharacterized protein (317 aa).

A compositionally biased stretch (low complexity) spans 68–78 (DSTNTDISNET). The segment at 68 to 87 (DSTNTDISNETPILSNNTPI) is disordered.

This is an uncharacterized protein from Methanocaldococcus jannaschii (strain ATCC 43067 / DSM 2661 / JAL-1 / JCM 10045 / NBRC 100440) (Methanococcus jannaschii).